A 274-amino-acid chain; its full sequence is Deoxyribonuclease TATDN3 (274 aa).

6 residues coordinate Zn(2+): histidine 12, histidine 14, glutamate 107, histidine 147, histidine 170, and aspartate 218.

The protein belongs to the metallo-dependent hydrolases superfamily. TatD-type hydrolase family. It depends on Mn(2+) as a cofactor. The cofactor is Ca(2+). Mg(2+) serves as cofactor. Zn(2+) is required as a cofactor.

The protein localises to the nucleus. The 3'-exonuclease activity is sensitive to the metal ion present in the active site, whereas the AP endodeoxyribonuclease activity is observed in a variety of divalent metal cofactors. 3'-exoxonuclease activity is suppressed in the presence of Ca(2+), Zn(2+) and Ni(2+). In terms of biological role, exhibits 3'-exonuclease activities and apurinic/apyrimidinic (AP) endonuclease (in vitro). Show preferential AP endonuclease activity on double-stranded DNA substrates and 3'- exonuclease activity on single-stranded DNA. This is Deoxyribonuclease TATDN3 (TATDN3) from Homo sapiens (Human).